The primary structure comprises 857 residues: Putative serine/threonine-protein kinase receptor (857 aa).

The first 32 residues, 1–32 (MKGARNIYHHSYMSFLLVFVVMILIHPALSIY), serve as a signal peptide directing secretion. Over 33-446 (INTLSSTESL…IAKKRNASGK (414 aa)) the chain is Extracellular. Residues 35-155 (TLSSTESLTI…SNNDASEYLW (121 aa)) form the Bulb-type lectin domain. N-linked (GlcNAc...) asparagine glycans are attached at residues N47, N120, N196, N260, N389, and N442. The 84-residue stretch at 350-433 (CSGDGFTRMK…DGQDLYVRLA (84 aa)) folds into the PAN domain. Disulfide bonds link C380-C405 and C388-C390. A helical membrane pass occupies residues 447–466 (IISLTVGVSVLLLLIMFCLW). At 467 to 857 (KRKQKRAKAS…QYTCSVIDAR (391 aa)) the chain is on the cytoplasmic side. The 252-residue stretch at 528 to 779 (FSSCNKLGQG…PSIFQPQEVL (252 aa)) folds into the Protein kinase domain. Residues 534–542 (LGQGGFGIV) and K556 contribute to the ATP site. D653 serves as the catalytic Proton acceptor.

This sequence belongs to the protein kinase superfamily. Ser/Thr protein kinase family. As to expression, predominantly in the pistil and anther.

It is found in the membrane. The catalysed reaction is L-seryl-[protein] + ATP = O-phospho-L-seryl-[protein] + ADP + H(+). It catalyses the reaction L-threonyl-[protein] + ATP = O-phospho-L-threonyl-[protein] + ADP + H(+). Its function is as follows. Involved in sporophytic self-incompatibility system (the inability of flowering plants to achieve self-fertilization), probably acting in combination with S-locus-specific glycoproteins. Interaction with a ligand in the extracellular domain triggers the protein kinase activity of the cytoplasmic domain. This chain is Putative serine/threonine-protein kinase receptor (SRK6), found in Brassica oleracea var. viridis (Flowering kale).